The chain runs to 407 residues: Shaggy-related protein kinase GSK1 (407 aa).

The segment covering 1-19 (MEAPPGPEPMELDAPPPPA) has biased composition (pro residues). The tract at residues 1 to 21 (MEAPPGPEPMELDAPPPPAAV) is disordered. In terms of domain architecture, Protein kinase spans 68-352 (YMAERVVGTG…ALDACAHSFF (285 aa)). ATP-binding positions include 74 to 82 (VGTGSFGIV) and Lys-97. The active-site Proton acceptor is Asp-193.

This sequence belongs to the protein kinase superfamily. CMGC Ser/Thr protein kinase family. GSK-3 subfamily. Interacts with LIC. As to expression, highly expressed in the entire young panicles, spikelets, awns, vascular bundles of palea and lemma, stigma and rachilla. Expressed in root tips, root hairs, lamina joint in the collar region, vascular bundles of coleoptiles.

The catalysed reaction is L-seryl-[protein] + ATP = O-phospho-L-seryl-[protein] + ADP + H(+). It carries out the reaction L-threonyl-[protein] + ATP = O-phospho-L-threonyl-[protein] + ADP + H(+). In terms of biological role, probable serine-threonine kinase that may act as a negative regulator of brassinosteroid (BR) signaling during flower development. May have physiological roles in stress signal-transduction pathways. Phosphorylates LIC in response to BR perception. This is Shaggy-related protein kinase GSK1 from Oryza sativa subsp. japonica (Rice).